We begin with the raw amino-acid sequence, 1482 residues long: Glutamate receptor ionotropic, NMDA 2B (1482 aa).

The first 26 residues, 1 to 26 (MKPSAECCSPKFWLVLAVLAVSGSKA), serve as a signal peptide directing secretion. Residues 27–557 (RSQKSPPSIG…SAFLEPFSAD (531 aa)) are Extracellular-facing. Asn-74 is a glycosylation site (N-linked (GlcNAc...) asparagine). A disulfide bridge connects residues Cys-86 and Cys-321. Residues His-127 and Glu-284 each contribute to the Zn(2+) site. Asn-341, Asn-348, Asn-444, and Asn-491 each carry an N-linked (GlcNAc...) asparagine glycan. 2 disulfides stabilise this stretch: Cys-429-Cys-456 and Cys-436-Cys-457. The L-glutamate site is built by Thr-514 and Arg-519. Asn-542 carries an N-linked (GlcNAc...) asparagine glycan. The chain crosses the membrane as a helical span at residues 558 to 576 (VWVMMFVMLLIVSAVAVFV). Topologically, residues 577–603 (FEYFSPVGYNRCLADGREPGGPSFTIG) are cytoplasmic. Positions 604–623 (KAIWLLWGLVFNNSVPVQNP) form an intramembrane region, discontinuously helical. The segment at 604 to 623 (KAIWLLWGLVFNNSVPVQNP) is pore-forming. At 624 to 630 (KGTTSKI) the chain is on the cytoplasmic side. Residues 631-646 (MVSVWAFFAVIFLASY) traverse the membrane as a helical segment. The Extracellular segment spans residues 647 to 817 (TANLAAFMIQ…VMSSQLDIDN (171 aa)). The N-linked (GlcNAc...) asparagine glycan is linked to Asn-688. Positions 690, 691, and 732 each coordinate L-glutamate. An intrachain disulfide couples Cys-746 to Cys-801. A helical transmembrane segment spans residues 818–837 (MAGVFYMLGAAMALSLITFI). Over 838–1482 (CEHLFYWQFR…EKLSSIESDV (645 aa)) the chain is Cytoplasmic. Phosphoserine occurs at positions 882, 886, 917, and 920. 2 positions are modified to phosphotyrosine: Tyr-962 and Tyr-1039. A phosphoserine mark is found at Ser-1058, Ser-1061, and Ser-1064. Tyr-1109 and Tyr-1133 each carry phosphotyrosine. Ser-1143 is subject to Phosphoserine. At Tyr-1155 the chain carries Phosphotyrosine. Positions 1161–1194 (DFKRDSVSGGGPCTNRSHLKHGTGEKHGVVGGVP) are disordered. 2 positions are modified to phosphoserine: Ser-1255 and Ser-1259. The disordered stretch occupies residues 1269–1301 (PVAVTSNASSTKYPQSPTNSKAQKKNRNKLRRQ). Polar residues predominate over residues 1272–1289 (VTSNASSTKYPQSPTNSK). The span at 1290–1301 (AQKKNRNKLRRQ) shows a compositional bias: basic residues. The interval 1292–1304 (KKNRNKLRRQHSY) is interaction with DAPK1. Ser-1303 carries the post-translational modification Phosphoserine. Tyr-1472 carries the phosphotyrosine modification. The short motif at 1480–1482 (SDV) is the PDZ-binding element.

The protein belongs to the glutamate-gated ion channel (TC 1.A.10.1) family. NR2B/GRIN2B subfamily. As to quaternary structure, heterotetramer. Forms heterotetrameric channels composed of two GluN1/zeta subunits (GRIN1), and two identical GluN2/epsilon subunits (GRIN2A, GRIN2B, GRIN2C or GRIN2D) or GluN3 subunits (GRIN3A or GRIN3B) (in vitro). Can also form heterotetrameric channels that contain at least two GluN1 subunits and at least two different GluN2 subunits (or a combination of one GluN2 and one GluN3 subunits) (in vitro). In vivo, the subunit composition may depend on the expression levels of the different subunits. Found in a complex with GRIN1, GRIN3A and PPP2CB. Found in a complex with GRIN1 and GRIN3B. Interacts with MAGI3. Interacts with HIP1 and NETO1. Interacts with PDZ domains of PATJ, DLG3 and DLG4. Interacts with DAPK1. Found in a complex with GRIN1 and PRR7. Interacts with PRR7. Interacts with CAMK2A. Interacts with ARC; preventing ARC oligomerization. Interacts with TMEM25. Interacts (via the extreme C-terminus) with FRMPD2 (via the second PDZ domain); the interaction is direct and is likely to promote NMDAR-mediated neural signal transmission. Interacts with FAM81A; the interaction facilitates condensate formation via liquid-liquid phase separation. Post-translationally, phosphorylated on tyrosine residues. Phosphorylation at Ser-1303 by DAPK1 enhances synaptic NMDA receptor channel activity. Expressed in the hippocampus including the dentate gyrus (at protein level). Detected in adult olfactory bulb, brain cortex, hippocampus, striatum, thalamus, superior colliculus, with much lower levels in inferior colliculus, midbrain and cerebellum.

It localises to the cell membrane. Its subcellular location is the postsynaptic cell membrane. The protein resides in the late endosome. The protein localises to the lysosome. It is found in the cytoplasm. It localises to the cytoskeleton. It catalyses the reaction Ca(2+)(in) = Ca(2+)(out). The catalysed reaction is Na(+)(in) = Na(+)(out). It carries out the reaction K(+)(in) = K(+)(out). Its activity is regulated as follows. NMDA glutamate receptor activity is inhibited by micromolar levels of zinc ions. NMDA glutamate receptor activity is inhibited by ifenprodil. Its function is as follows. Component of N-methyl-D-aspartate (NMDA) receptors (NMDARs) that function as heterotetrameric, ligand-gated cation channels with high calcium permeability and voltage-dependent block by Mg(2+). Participates in synaptic plasticity for learning and memory formation by contributing to the long-term depression (LTD) of hippocampus membrane currents. Channel activation requires binding of the neurotransmitter L-glutamate to the GluN2 subunit, glycine or D-serine binding to the GluN1 subunit, plus membrane depolarization to eliminate channel inhibition by Mg(2+). NMDARs mediate simultaneously the potasium efflux and the influx of calcium and sodium. Each GluN2 subunit confers differential attributes to channel properties, including activation, deactivation and desensitization kinetics, pH sensitivity, Ca2(+) permeability, and binding to allosteric modulators. In concert with DAPK1 at extrasynaptic sites, acts as a central mediator for stroke damage. Its phosphorylation at Ser-1303 by DAPK1 enhances synaptic NMDA receptor channel activity inducing injurious Ca2+ influx through them, resulting in an irreversible neuronal death. The sequence is that of Glutamate receptor ionotropic, NMDA 2B from Rattus norvegicus (Rat).